The chain runs to 747 residues: Protein FAM83C (747 aa).

Residues 1–309 (MFGGPGPGVL…LYAESQPVEG (309 aa)) are DUF1669. 7 disordered regions span residues 322 to 352 (LRPP…SSIK), 374 to 412 (TGVV…LYRA), 462 to 484 (LSRF…GRWV), 517 to 550 (AREV…SPSQ), 588 to 633 (NQSR…LGHS), 646 to 672 (GEGP…DEKR), and 692 to 715 (ARQG…DLVR). Over residues 328 to 350 (ALAFRPDVPSPTSSLPSSTSLSS) the composition is skewed to low complexity. Over residues 390-402 (GQPSLHRQLSDPN) the composition is skewed to polar residues. The span at 697-707 (EPGGPKGGHLN) shows a compositional bias: gly residues.

It belongs to the FAM83 family. In terms of assembly, may interact with RAF1. Phosphorylated in vitro by CSNK1A1.

The protein localises to the cytoplasm. In terms of biological role, may play a role in MAPK signaling. The chain is Protein FAM83C from Homo sapiens (Human).